A 475-amino-acid polypeptide reads, in one-letter code: Ribulose bisphosphate carboxylase large chain (475 aa).

Positions M1–S2 are excised as a propeptide. P3 is modified (N-acetylproline). Position 14 is an N6,N6,N6-trimethyllysine (K14). 2 residues coordinate substrate: N123 and T173. K175 (proton acceptor) is an active-site residue. K177 serves as a coordination point for substrate. Residues K201, D203, and E204 each coordinate Mg(2+). K201 bears the N6-carboxylysine mark. H294 functions as the Proton acceptor in the catalytic mechanism. Positions 295, 327, and 379 each coordinate substrate.

The protein belongs to the RuBisCO large chain family. Type I subfamily. In terms of assembly, heterohexadecamer of 8 large chains and 8 small chains; disulfide-linked. The disulfide link is formed within the large subunit homodimers. Mg(2+) is required as a cofactor. Post-translationally, the disulfide bond which can form in the large chain dimeric partners within the hexadecamer appears to be associated with oxidative stress and protein turnover.

Its subcellular location is the plastid. It is found in the chloroplast. The enzyme catalyses 2 (2R)-3-phosphoglycerate + 2 H(+) = D-ribulose 1,5-bisphosphate + CO2 + H2O. It carries out the reaction D-ribulose 1,5-bisphosphate + O2 = 2-phosphoglycolate + (2R)-3-phosphoglycerate + 2 H(+). Functionally, ruBisCO catalyzes two reactions: the carboxylation of D-ribulose 1,5-bisphosphate, the primary event in carbon dioxide fixation, as well as the oxidative fragmentation of the pentose substrate in the photorespiration process. Both reactions occur simultaneously and in competition at the same active site. This Oenothera argillicola (Appalachian evening primrose) protein is Ribulose bisphosphate carboxylase large chain.